The chain runs to 293 residues: Formamidopyrimidine-DNA glycosylase (293 aa).

The active-site Schiff-base intermediate with DNA is Pro2. Glu3 acts as the Proton donor in catalysis. The Proton donor; for beta-elimination activity role is filled by Lys58. The DNA site is built by His104, Arg123, and Lys166. The segment at Gln257–Arg293 adopts an FPG-type zinc-finger fold. The Proton donor; for delta-elimination activity role is filled by Arg283.

This sequence belongs to the FPG family. As to quaternary structure, monomer. It depends on Zn(2+) as a cofactor.

The catalysed reaction is Hydrolysis of DNA containing ring-opened 7-methylguanine residues, releasing 2,6-diamino-4-hydroxy-5-(N-methyl)formamidopyrimidine.. The enzyme catalyses 2'-deoxyribonucleotide-(2'-deoxyribose 5'-phosphate)-2'-deoxyribonucleotide-DNA = a 3'-end 2'-deoxyribonucleotide-(2,3-dehydro-2,3-deoxyribose 5'-phosphate)-DNA + a 5'-end 5'-phospho-2'-deoxyribonucleoside-DNA + H(+). Functionally, involved in base excision repair of DNA damaged by oxidation or by mutagenic agents. Acts as a DNA glycosylase that recognizes and removes damaged bases. Has a preference for oxidized purines, such as 7,8-dihydro-8-oxoguanine (8-oxoG). Has AP (apurinic/apyrimidinic) lyase activity and introduces nicks in the DNA strand. Cleaves the DNA backbone by beta-delta elimination to generate a single-strand break at the site of the removed base with both 3'- and 5'-phosphates. This is Formamidopyrimidine-DNA glycosylase from Bradyrhizobium sp. (strain ORS 278).